A 164-amino-acid chain; its full sequence is Protein SprT (164 aa).

In terms of domain architecture, SprT-like spans 12–157; sequence CFLQAESFFK…CRRCRQTLVF (146 aa). Zn(2+) is bound at residue His69. Residue Glu70 is part of the active site. A Zn(2+)-binding site is contributed by His73.

Belongs to the SprT family. It depends on Zn(2+) as a cofactor.

It is found in the cytoplasm. The sequence is that of Protein SprT from Pseudomonas fluorescens (strain SBW25).